The chain runs to 419 residues: 1,4-beta-D-glucan cellobiohydrolase CEL6B (419 aa).

The first 47 residues, 1–47 (MGESFLLLQPASPALSPTPSSLLLGPTITMRADVLIAALATGALVAA), serve as a signal peptide directing secretion. Substrate contacts are provided by W111 and S113. Residues D152 and D199 each act as proton donor in the active site. Substrate is bound at residue W247. N284 is a glycosylation site (N-linked (GlcNAc...) asparagine). Position 287 (N287) interacts with substrate. N298 carries N-linked (GlcNAc...) asparagine glycosylation. W347 contributes to the substrate binding site. An N-linked (GlcNAc...) asparagine glycan is attached at N364. Positions 375 and 379 each coordinate substrate.

Belongs to the glycosyl hydrolase 6 (cellulase B) family. Post-translationally, both N- and O-glycosylated.

It localises to the secreted. The enzyme catalyses Hydrolysis of (1-&gt;4)-beta-D-glucosidic linkages in cellulose and cellotetraose, releasing cellobiose from the non-reducing ends of the chains.. Functionally, exoglucanase that plays an important function in biomass degradation by catalyzing the hydrolysis of the non-reducing end beta-1,4-glucosidic linkages in cellulose and cellotetraose to release cellobiose. Hydrolyzes crystalline and amorphous cellulose but is inactive on hydroxyethyl cellulose, mannan, galactomannan, xyloglucan, arabinoxylan, arabinan, xylan, and pectin. This Podospora anserina (strain S / ATCC MYA-4624 / DSM 980 / FGSC 10383) (Pleurage anserina) protein is 1,4-beta-D-glucan cellobiohydrolase CEL6B.